The chain runs to 275 residues: 4-diphosphocytidyl-2-C-methyl-D-erythritol kinase (275 aa).

The active site involves K8. 86 to 96 provides a ligand contact to ATP; it reads PEGAGLGGGSS. The active site involves D125.

Belongs to the GHMP kinase family. IspE subfamily.

It catalyses the reaction 4-CDP-2-C-methyl-D-erythritol + ATP = 4-CDP-2-C-methyl-D-erythritol 2-phosphate + ADP + H(+). The protein operates within isoprenoid biosynthesis; isopentenyl diphosphate biosynthesis via DXP pathway; isopentenyl diphosphate from 1-deoxy-D-xylulose 5-phosphate: step 3/6. In terms of biological role, catalyzes the phosphorylation of the position 2 hydroxy group of 4-diphosphocytidyl-2C-methyl-D-erythritol. This is 4-diphosphocytidyl-2-C-methyl-D-erythritol kinase from Thermus thermophilus (strain ATCC BAA-163 / DSM 7039 / HB27).